We begin with the raw amino-acid sequence, 159 residues long: 2-C-methyl-D-erythritol 2,4-cyclodiphosphate synthase (159 aa).

Asp-8 and His-10 together coordinate a divalent metal cation. 4-CDP-2-C-methyl-D-erythritol 2-phosphate is bound by residues Asp-8–His-10 and His-34–Ser-35. His-42 contacts a divalent metal cation. Residues Asp-56–Gly-58, Phe-61–Asp-65, Phe-139, and Arg-142 each bind 4-CDP-2-C-methyl-D-erythritol 2-phosphate.

It belongs to the IspF family. Homotrimer. A divalent metal cation is required as a cofactor.

The catalysed reaction is 4-CDP-2-C-methyl-D-erythritol 2-phosphate = 2-C-methyl-D-erythritol 2,4-cyclic diphosphate + CMP. It participates in isoprenoid biosynthesis; isopentenyl diphosphate biosynthesis via DXP pathway; isopentenyl diphosphate from 1-deoxy-D-xylulose 5-phosphate: step 4/6. Its function is as follows. Involved in the biosynthesis of isopentenyl diphosphate (IPP) and dimethylallyl diphosphate (DMAPP), two major building blocks of isoprenoid compounds. Catalyzes the conversion of 4-diphosphocytidyl-2-C-methyl-D-erythritol 2-phosphate (CDP-ME2P) to 2-C-methyl-D-erythritol 2,4-cyclodiphosphate (ME-CPP) with a corresponding release of cytidine 5-monophosphate (CMP). The chain is 2-C-methyl-D-erythritol 2,4-cyclodiphosphate synthase from Syntrophus aciditrophicus (strain SB).